The chain runs to 55 residues: MAKKNKARLLVKLLSTAGTGFFYVRSRPKAAPKLAFIKYDPKIHKRVLFEESKMK.

Belongs to the bacterial ribosomal protein bL33 family. As to quaternary structure, component of the mitochondrial large ribosomal subunit (mt-LSU). Mature yeast 74S mitochondrial ribosomes consist of a small (37S) and a large (54S) subunit. The 37S small subunit contains a 15S ribosomal RNA (15S mt-rRNA) and at least 32 different proteins. The 54S large subunit contains a 21S rRNA (21S mt-rRNA) and at least 45 different proteins. bL33m stabilizes the tRNA acceptor stem in the E-site.

It localises to the mitochondrion. Its function is as follows. Component of the mitochondrial ribosome (mitoribosome), a dedicated translation machinery responsible for the synthesis of mitochondrial genome-encoded proteins, including at least some of the essential transmembrane subunits of the mitochondrial respiratory chain. The mitoribosomes are attached to the mitochondrial inner membrane and translation products are cotranslationally integrated into the membrane. The polypeptide is Large ribosomal subunit protein bL33m (mrpl39) (Schizosaccharomyces pombe (strain 972 / ATCC 24843) (Fission yeast)).